The primary structure comprises 282 residues: Glycine/sarcosine N-methyltransferase (282 aa).

Positions 1–23 (MTSTQNHPLQTQDDQQRFGQSPE) are enriched in polar residues. A disordered region spans residues 1–27 (MTSTQNHPLQTQDDQQRFGQSPESVRE). S-adenosyl-L-methionine contacts are provided by residues tyrosine 35, tryptophan 43, arginine 52, alanine 76, aspartate 97, 123 to 124 (DW), and leucine 141. Asparagine 143, arginine 176, and tyrosine 217 together coordinate substrate.

Belongs to the class I-like SAM-binding methyltransferase superfamily. Glycine N-methyltransferase family. Monomer.

It carries out the reaction glycine + 2 S-adenosyl-L-methionine = N,N-dimethylglycine + 2 S-adenosyl-L-homocysteine + 2 H(+). It catalyses the reaction glycine + S-adenosyl-L-methionine = sarcosine + S-adenosyl-L-homocysteine + H(+). The catalysed reaction is sarcosine + S-adenosyl-L-methionine = N,N-dimethylglycine + S-adenosyl-L-homocysteine + H(+). It participates in amine and polyamine biosynthesis; betaine biosynthesis via glycine pathway; betaine from glycine: step 1/3. Its pathway is amine and polyamine biosynthesis; betaine biosynthesis via glycine pathway; betaine from glycine: step 2/3. Functionally, catalyzes the methylation of glycine and sarcosine to sarcosine and dimethylglycine, respectively, with S-adenosylmethionine (AdoMet) acting as the methyl donor. It has strict specificity for glycine and sarcosine as the methyl group acceptors. The polypeptide is Glycine/sarcosine N-methyltransferase (Parasynechococcus marenigrum (strain WH8102)).